The sequence spans 195 residues: Peptidyl-tRNA hydrolase (195 aa).

Residue Tyr17 participates in tRNA binding. His22 serves as the catalytic Proton acceptor. 3 residues coordinate tRNA: Tyr68, Asn70, and Asn116.

This sequence belongs to the PTH family. Monomer.

The protein resides in the cytoplasm. It carries out the reaction an N-acyl-L-alpha-aminoacyl-tRNA + H2O = an N-acyl-L-amino acid + a tRNA + H(+). Hydrolyzes ribosome-free peptidyl-tRNAs (with 1 or more amino acids incorporated), which drop off the ribosome during protein synthesis, or as a result of ribosome stalling. Functionally, catalyzes the release of premature peptidyl moieties from peptidyl-tRNA molecules trapped in stalled 50S ribosomal subunits, and thus maintains levels of free tRNAs and 50S ribosomes. This is Peptidyl-tRNA hydrolase from Shewanella sp. (strain ANA-3).